The chain runs to 371 residues: DNA replication and repair protein RecF (371 aa).

30–37 (GPNAQGKT) is a binding site for ATP.

The protein belongs to the RecF family.

It localises to the cytoplasm. Its function is as follows. The RecF protein is involved in DNA metabolism; it is required for DNA replication and normal SOS inducibility. RecF binds preferentially to single-stranded, linear DNA. It also seems to bind ATP. The protein is DNA replication and repair protein RecF of Desulforamulus reducens (strain ATCC BAA-1160 / DSM 100696 / MI-1) (Desulfotomaculum reducens).